The primary structure comprises 101 residues: Small ribosomal subunit protein uS14 (101 aa).

This sequence belongs to the universal ribosomal protein uS14 family. Part of the 30S ribosomal subunit. Contacts proteins S3 and S10.

In terms of biological role, binds 16S rRNA, required for the assembly of 30S particles and may also be responsible for determining the conformation of the 16S rRNA at the A site. In Polynucleobacter necessarius subsp. necessarius (strain STIR1), this protein is Small ribosomal subunit protein uS14.